The sequence spans 221 residues: uncharacterized protein (221 aa).

Positions 1-189 (MDSGKDTNGY…NVVYCSEKAV (189 aa)) constitute a Peptidase S8 domain.

Belongs to the peptidase S8 family.

This is an uncharacterized protein from Aquifex aeolicus (strain VF5).